The primary structure comprises 236 residues: Uridylate kinase (236 aa).

10–13 (KLSG) contributes to the ATP binding site. Glycine 52 provides a ligand contact to UMP. 2 residues coordinate ATP: glycine 53 and arginine 57. UMP contacts are provided by residues aspartate 72 and 133–140 (TGNPFFTT). Residues threonine 160, tyrosine 166, and aspartate 169 each coordinate ATP.

It belongs to the UMP kinase family. Homohexamer.

Its subcellular location is the cytoplasm. It catalyses the reaction UMP + ATP = UDP + ADP. Its pathway is pyrimidine metabolism; CTP biosynthesis via de novo pathway; UDP from UMP (UMPK route): step 1/1. With respect to regulation, inhibited by UTP. Functionally, catalyzes the reversible phosphorylation of UMP to UDP. This chain is Uridylate kinase, found in Parabacteroides distasonis (strain ATCC 8503 / DSM 20701 / CIP 104284 / JCM 5825 / NCTC 11152).